Consider the following 594-residue polypeptide: MTTGTDVRISLRLLFYELWDNNAKLTKNKTTTPTTSKTTSKILFNSKRTTPTHGYDADYIAELSNNFEFAGFTAPTPHNIRKAFTRLKIMFERMNRYPDEIFLSRHRMLGFVIYQPETSGPIPAFHPKCKFYKLSDNHTHDEKIEIVKNHILNGEIVKTVDLKIDQSFESYYYDKSNAQASQKFLASMHTCDFSFLSFPYINDLTATELGLLPEWAAILLSYMKIINVRGIYNDVVECIDPSQQFCVFEIIGSLTGISNGHFWSVLNDRRSMDVIAKEVEKIALDNQPFXKDGNLNHLLFNSINLSDPLNFNIFHYSFKLKIFPTTLNPLDDLVLLRMKDLIKAFNAGNDVQVIGNKCIGKTRLTAELKKKYLNLLIIDSDDYGKFITLLLNNCPNLFLNNDFEINDEVFEEEIFNVTVIEYANVIRDGTIVIETFFERLMFEIMSLNLTNGEYDVDAIFHSFNARFHAIVNSSMIGYRLFFTKFRKLMFDNFNYTQVLHFVHSYSELSFYPHCVAYITLEPSYNPCCLLYKNRVKRFLSITRSDKGVSSELFLHQFYEKFTTKVNPTPVFVFRYYFGLTNGLSISELALDENT.

The protein resides in the virion. It is found in the host cytoplasm. Its subcellular location is the host cytoskeleton. Minor inner capsid component. Displays NTPase and RNA 5'-triphosphatase (RTPase) activities. May function as a cofactor of polymerase VP1. Associates with microtubules and plays a role in the formation, structural organization and morphology of viral inclusions, where the assembly of cores and the replication of viral RNA occur. The sequence is that of Microtubule-associated protein VP8 (S8) from Saccharum officinarum (Sugarcane).